A 283-amino-acid polypeptide reads, in one-letter code: tRNA pseudouridine synthase B (283 aa).

The Nucleophile role is filled by aspartate 38.

It belongs to the pseudouridine synthase TruB family. Type 1 subfamily.

The catalysed reaction is uridine(55) in tRNA = pseudouridine(55) in tRNA. Functionally, responsible for synthesis of pseudouridine from uracil-55 in the psi GC loop of transfer RNAs. The chain is tRNA pseudouridine synthase B from Onion yellows phytoplasma (strain OY-M).